Consider the following 274-residue polypeptide: Dehydration-responsive element-binding protein 2A (274 aa).

Basic and acidic residues-rich tracts occupy residues 1 to 10 (MERGEGRRGD) and 35 to 50 (KWWKEQNQKLQEENSS). The disordered stretch occupies residues 1–75 (MERGEGRRGD…KGGPENSNCA (75 aa)). The AP2/ERF DNA-binding region spans 75 to 132 (AYRGVRQRTWGKWVAEIREPNRGRRLWLGSFPTALEAAHAYDEAARAMYGPTARVNFA).

It belongs to the AP2/ERF transcription factor family. ERF subfamily.

It localises to the nucleus. Transcriptional activator that binds specifically to the DNA sequence 5'-[AG]CCGAC-3' of the cis-acting dehydration-responsive element (DRE). Binding to the C-repeat/DRE element mediates high salinity- and dehydration-inducible transcription. This chain is Dehydration-responsive element-binding protein 2A (DREB2A), found in Oryza sativa subsp. japonica (Rice).